Consider the following 634-residue polypeptide: Frizzled and smoothened-like protein D (634 aa).

An N-terminal signal peptide occupies residues Met-1 to Cys-21. The Extracellular segment spans residues Gln-22–Lys-257. Positions Asp-34–Gly-178 constitute an FZ domain. Asn-126, Asn-168, Asn-215, Asn-243, and Asn-254 each carry an N-linked (GlcNAc...) asparagine glycan. A helical transmembrane segment spans residues Ala-258 to Ile-278. The Cytoplasmic segment spans residues Lys-279–Cys-287. Residues Ile-288–Val-308 form a helical membrane-spanning segment. The Extracellular segment spans residues Gly-309 to Ser-335. The helical transmembrane segment at Ile-336–Tyr-356 threads the bilayer. Residues Ser-357–Arg-368 lie on the Cytoplasmic side of the membrane. Residues Tyr-369 to Lys-389 traverse the membrane as a helical segment. At Lys-390–Ala-410 the chain is on the extracellular side. A helical membrane pass occupies residues Ile-411–Ile-431. Over Phe-432–Lys-454 the chain is Cytoplasmic. The helical transmembrane segment at Pro-455–Asp-475 threads the bilayer. Topologically, residues Ser-476 to Ser-513 are extracellular. Residues Tyr-514–Thr-534 traverse the membrane as a helical segment. Over Ser-535–Ile-634 the chain is Cytoplasmic. The interval Val-560–Lys-624 is disordered. 2 stretches are compositionally biased toward low complexity: residues Ser-572 to Thr-592 and Asp-609 to Asn-622.

It belongs to the G-protein coupled receptor Fz/Smo family.

It localises to the membrane. The chain is Frizzled and smoothened-like protein D (fslD) from Dictyostelium discoideum (Social amoeba).